Consider the following 592-residue polypeptide: uncharacterized protein (592 aa).

The first 23 residues, 1–23 (MRKAPLLRFTLASLALACSQAFA), serve as a signal peptide directing secretion. Serine 37 (nucleophile) is an active-site residue. Residues aspartate 294 and histidine 297 contribute to the active site. The Autotransporter domain maps to 334–592 (HQDELRNQWQ…PDPGEPGGKP (259 aa)). Residues 572-592 (FTLTGYTPHTAPDPGEPGGKP) are disordered.

It belongs to the 'GDSL' lipolytic enzyme family.

This is an uncharacterized protein from Pseudomonas putida (Arthrobacter siderocapsulatus).